Consider the following 476-residue polypeptide: Vitamin D-binding protein (476 aa).

Positions 1-16 (MKRVLLLLLAVVCGHA) are cleaved as a signal peptide. Albumin domains follow at residues 17-208 (LERG…QIKH), 209-394 (LSLL…VLKK), and 395-476 (EVSS…LPEP). 2 disulfides stabilise this stretch: Cys-29–Cys-75 and Cys-74–Cys-83. The N-linked (GlcNAc...) asparagine glycan is linked to Asn-86. 12 disulfides stabilise this stretch: Cys-96–Cys-112, Cys-111–Cys-122, Cys-145–Cys-190, Cys-189–Cys-198, Cys-220–Cys-266, Cys-265–Cys-273, Cys-286–Cys-300, Cys-299–Cys-311, Cys-335–Cys-376, Cys-375–Cys-384, Cys-407–Cys-453, and Cys-452–Cys-462.

Belongs to the ALB/AFP/VDB family. In terms of assembly, associates with membrane-bound immunoglobulin on the surface of B-lymphocytes and with IgG Fc receptor on the membranes of T-lymphocytes. Interacts with LRP2; the interaction is required for renal uptake of GC in complex with 25-hydroxyvitamin D3.

The protein localises to the secreted. Functionally, involved in vitamin D transport and storage, scavenging of extracellular G-actin, enhancement of the chemotactic activity of C5 alpha for neutrophils in inflammation and macrophage activation. This is Vitamin D-binding protein (GC) from Oryctolagus cuniculus (Rabbit).